The chain runs to 236 residues: ATP synthase subunit a (236 aa).

5 helical membrane-spanning segments follow: residues 17-37 (LANV…AVLA), 80-100 (MTLI…SVVI), 114-134 (VVTL…GIKL), 179-199 (ILLA…IAAI), and 208-228 (FSIF…MVYM).

It belongs to the ATPase A chain family. F-type ATPases have 2 components, CF(1) - the catalytic core - and CF(0) - the membrane proton channel. CF(1) has five subunits: alpha(3), beta(3), gamma(1), delta(1), epsilon(1). CF(0) has three main subunits: a(1), b(2) and c(9-12). The alpha and beta chains form an alternating ring which encloses part of the gamma chain. CF(1) is attached to CF(0) by a central stalk formed by the gamma and epsilon chains, while a peripheral stalk is formed by the delta and b chains.

It localises to the cell membrane. Key component of the proton channel; it plays a direct role in the translocation of protons across the membrane. In Anoxybacillus flavithermus (strain DSM 21510 / WK1), this protein is ATP synthase subunit a.